Here is a 185-residue protein sequence, read N- to C-terminus: Putative manganese efflux pump MntP (185 aa).

Helical transmembrane passes span 3 to 23 (PFAV…VSVG), 41 to 61 (AVFG…GVAA), 70 to 90 (HWLA…AAVW), 101 to 121 (SFTV…AVGV), 123 to 143 (LAFL…ATFL), and 165 to 185 (AVAG…HLTA).

Belongs to the MntP (TC 9.B.29) family.

Its subcellular location is the cell inner membrane. Its function is as follows. Probably functions as a manganese efflux pump. This chain is Putative manganese efflux pump MntP, found in Bradyrhizobium sp. (strain BTAi1 / ATCC BAA-1182).